We begin with the raw amino-acid sequence, 292 residues long: MSKKQSSTPHDALFKLFLRQPDTARDFLAFHLPAPIHALCDMKTLKLESSSFIDDDLRESYSDVLWSVKTEQGPGYIYCLIEHQSTSNKLIAFRMMRYAIAAMQNHLDAGYKTLPMVVPLLFYHGIESPYPYSLCWLDCFADPKLARQLYASAFPLIDVTVMPDDEIMQHRRMALLELIQKHIRQRDLMGLVEQMACLLSSGYANDRQIKGLFNYILQTGDAVRFNDFIDGVAERSPKHKESLMTIAERLRQEGEQSKALHIAKIMLESGVPLADIMRFTGLSEEELAAASQ.

This sequence belongs to the Rpn/YhgA-like nuclease family. It depends on Mg(2+) as a cofactor.

With respect to regulation, inhibited by EDTA, Zn(2+) and by Mg(2+) plus Mn(2+); stimulated by Ca(2+) in the presence of Mg(2+). Functionally, a low activity DNA endonuclease yielding 3'-hydroxyl ends, equally active on ss or dsDNA, not active on dsRNA. Shows no sequence specificity. Upon expression enhances RecA-independent DNA recombination 49-fold, concomitantly reducing viability by 88% and probably inducing DNA damage as measured by induction of the SOS repair response in RecA cells. RecA-independent DNA recombination leads to replacement of recipient genes with large segments of donor DNA rather than DNA addition to the donor strain; increased expression of RpnA leads to smaller replacement segments, suggesting this protein may play a role in generating crossover events. The sequence is that of Recombination-promoting nuclease RpnA from Escherichia coli (strain K12).